Here is a 236-residue protein sequence, read N- to C-terminus: Large ribosomal subunit protein uL1 (236 aa).

It belongs to the universal ribosomal protein uL1 family. In terms of assembly, part of the 50S ribosomal subunit.

Functionally, binds directly to 23S rRNA. The L1 stalk is quite mobile in the ribosome, and is involved in E site tRNA release. Its function is as follows. Protein L1 is also a translational repressor protein, it controls the translation of the L11 operon by binding to its mRNA. This Sorangium cellulosum (strain So ce56) (Polyangium cellulosum (strain So ce56)) protein is Large ribosomal subunit protein uL1.